The following is a 619-amino-acid chain: Dihydroxy-acid dehydratase (619 aa).

D81 lines the Mg(2+) pocket. C122 contributes to the [2Fe-2S] cluster binding site. Mg(2+) contacts are provided by D123 and K124. Residue K124 is modified to N6-carboxylysine. Residue C198 participates in [2Fe-2S] cluster binding. E494 contacts Mg(2+). S520 acts as the Proton acceptor in catalysis.

Belongs to the IlvD/Edd family. In terms of assembly, homodimer. The cofactor is [2Fe-2S] cluster. Mg(2+) serves as cofactor.

The catalysed reaction is (2R)-2,3-dihydroxy-3-methylbutanoate = 3-methyl-2-oxobutanoate + H2O. It catalyses the reaction (2R,3R)-2,3-dihydroxy-3-methylpentanoate = (S)-3-methyl-2-oxopentanoate + H2O. Its pathway is amino-acid biosynthesis; L-isoleucine biosynthesis; L-isoleucine from 2-oxobutanoate: step 3/4. It functions in the pathway amino-acid biosynthesis; L-valine biosynthesis; L-valine from pyruvate: step 3/4. In terms of biological role, functions in the biosynthesis of branched-chain amino acids. Catalyzes the dehydration of (2R,3R)-2,3-dihydroxy-3-methylpentanoate (2,3-dihydroxy-3-methylvalerate) into 2-oxo-3-methylpentanoate (2-oxo-3-methylvalerate) and of (2R)-2,3-dihydroxy-3-methylbutanoate (2,3-dihydroxyisovalerate) into 2-oxo-3-methylbutanoate (2-oxoisovalerate), the penultimate precursor to L-isoleucine and L-valine, respectively. This Neisseria gonorrhoeae (strain ATCC 700825 / FA 1090) protein is Dihydroxy-acid dehydratase.